The following is a 348-amino-acid chain: Transmembrane protease serine 12 (348 aa).

The first 20 residues, 1-20, serve as a signal peptide directing secretion; it reads MRLGLLSVALLFVGSSHLYS. At 21–324 the chain is on the extracellular side; the sequence is DHYSPSGRHR…EHFFHASTQG (304 aa). The interval 24–46 is disordered; sequence SPSGRHRLGPSPEPAASSQQAEA. A Peptidase S1 domain is found at 78-318; it reads IIGGTEAQAG…YQKWLTEHFF (241 aa). A disulfide bridge connects residues Cys107 and Cys123. Catalysis depends on charge relay system residues His122 and Asp171. 3 disulfides stabilise this stretch: Cys206/Cys274, Cys237/Cys253, and Cys264/Cys294. Asn219 and Asn249 each carry an N-linked (GlcNAc...) asparagine glycan. The active-site Charge relay system is Ser268. A helical membrane pass occupies residues 325 to 345; sequence ILTINILRGQILIALCFVILL. The Cytoplasmic portion of the chain corresponds to 346-348; it reads ATT.

This sequence belongs to the peptidase S1 family. In testis, expressed in spermatocytes and spermatids (at protein level).

Its subcellular location is the cell membrane. It is found in the cytoplasmic vesicle. The protein localises to the secretory vesicle. The protein resides in the acrosome. Required for male fertility. Plays a critical role in sperm capacitation and acrosome reactions during fertilization, and also plays a role in the regulation of proteins involved in spermatogenesis. Regulates protein pathways that promote chromosomal synapsis formation, double-strand break repair, formation of the inner mitochondrial membrane cristae and apoptosis in developing sperm. Required for normal sperm motility and binding to the zona pellucida, potentially via a role in ADAM3 protein maturation. The polypeptide is Transmembrane protease serine 12 (Homo sapiens (Human)).